A 351-amino-acid chain; its full sequence is Methylthioribose-1-phosphate isomerase (351 aa).

Residues 53 to 55, Arg-96, and Gln-205 contribute to the substrate site; that span reads RGA. Asp-246 serves as the catalytic Proton donor. 256 to 257 serves as a coordination point for substrate; it reads NK.

The protein belongs to the eIF-2B alpha/beta/delta subunits family. MtnA subfamily.

It carries out the reaction 5-(methylsulfanyl)-alpha-D-ribose 1-phosphate = 5-(methylsulfanyl)-D-ribulose 1-phosphate. The protein operates within amino-acid biosynthesis; L-methionine biosynthesis via salvage pathway; L-methionine from S-methyl-5-thio-alpha-D-ribose 1-phosphate: step 1/6. Functionally, catalyzes the interconversion of methylthioribose-1-phosphate (MTR-1-P) into methylthioribulose-1-phosphate (MTRu-1-P). This chain is Methylthioribose-1-phosphate isomerase, found in Synechocystis sp. (strain ATCC 27184 / PCC 6803 / Kazusa).